Reading from the N-terminus, the 898-residue chain is Endoplasmic reticulum metallopeptidase 1 (898 aa).

Met1 carries the post-translational modification N-acetylmethionine. The disordered stretch occupies residues 1–55 (MEWSSESAAVRRHRGTAERREGEAAASHRQREASAQEDAKGVGRMWGKTENGGGS). Residues 1–66 (MEWSSESAAV…VAKTALSEAR (66 aa)) are Cytoplasmic-facing. Over residues 29-41 (RQREASAQEDAKG) the composition is skewed to basic and acidic residues. The chain crosses the membrane as a helical span at residues 67–87 (TALALALYLLALRALVQLSLQ). Residues 88–393 (RLVLSRTSGL…SSSEYRHGSM (306 aa)) lie on the Lumenal side of the membrane. A glycan (N-linked (GlcNAc...) asparagine) is linked at Asn176. A disulfide bond links Cys198 and Cys216. 2 residues coordinate Zn(2+): His199 and Asp211. Glu245 functions as the Proton acceptor in the catalytic mechanism. Residues Glu246, Glu272, and His348 each contribute to the Zn(2+) site. The helical transmembrane segment at 394–414 (VFFDVLGLLVIAYPSRVGSII) threads the bilayer. At 415–451 (NYMVVMAVVLYLGKKLLRPKHRNANYMRDFLCGLGIT) the chain is on the cytoplasmic side. The chain crosses the membrane as a helical span at residues 452–472 (FISWFTSLVTVLIIAVFISLI). At 473 to 480 (GQSLSWYN) the chain is on the lumenal side. The chain crosses the membrane as a helical span at residues 481–501 (YFYIAVCLYGTATVAKIIFIH). The Cytoplasmic portion of the chain corresponds to 502 to 515 (TLAKRFYYMNASDL). A helical transmembrane segment spans residues 516 to 538 (YLGELFFDTSLFVHCAFLVALTY). Topologically, residues 539-542 (QGFC) are lumenal. Residues 543–562 (SAFMSAVWVVFPLLTKLCVY) traverse the membrane as a helical segment. At 563 to 573 (KDFKKHGAQGR) the chain is on the cytoplasmic side. A helical transmembrane segment spans residues 574–594 (FVALYLLGMFIPYLYGLYLIW). The Lumenal segment spans residues 595-615 (AVFEMFTPILGRSGSEIPPDV). The chain crosses the membrane as a helical span at residues 616–636 (VLASILAVCVMILSSYFITFI). Residues 637-645 (YLVNSTKKT) lie on the Cytoplasmic side of the membrane. The helical transmembrane segment at 646-666 (ILTLILVCAVTFLLVCSGAFF) threads the bilayer. At 667 to 898 (PYSSNPESPK…WVSTYSLFVF (232 aa)) the chain is on the lumenal side. N-linked (GlcNAc...) asparagine glycosylation is present at Asn724.

The protein belongs to the peptidase M28 family. The cofactor is Zn(2+).

The protein resides in the endoplasmic reticulum membrane. Functionally, within the ovary, required for the organization of somatic cells and oocytes into discrete follicular structures. The chain is Endoplasmic reticulum metallopeptidase 1 from Mus musculus (Mouse).